The sequence spans 112 residues: MVKGRQGERVRLYVRGTILGYKRSKSNQYPNTSLVQIEGVNTQEEVNWYKGKRMAYIYKAKTKKNGSHYRCIWGKVTRPHGNSGVVRAKFTSNLPPKSMGSRVRVFMYPSNI.

This sequence belongs to the eukaryotic ribosomal protein eL33 family.

The protein is Large ribosomal subunit protein eL33y (RPL35AC) of Arabidopsis thaliana (Mouse-ear cress).